The sequence spans 218 residues: Ras-related protein RabT2 (218 aa).

Residue 32–39 coordinates GTP; it reads GDYKTGKG. Positions 54–61 match the Effector region motif; it reads VSSIGVDF. GTP is bound by residues 80–84 and 140–143; these read DANSC and NKCD. Cys215 carries the cysteine methyl ester modification. Residue Cys215 is the site of S-geranylgeranyl cysteine attachment. Positions 216 to 218 are cleaved as a propeptide — removed in mature form; sequence NIL.

It belongs to the small GTPase superfamily. Rab family.

Its subcellular location is the cell membrane. This is Ras-related protein RabT2 (rabT2) from Dictyostelium discoideum (Social amoeba).